We begin with the raw amino-acid sequence, 101 residues long: Urease subunit beta (101 aa).

The protein belongs to the urease beta subunit family. In terms of assembly, heterotrimer of UreA (gamma), UreB (beta) and UreC (alpha) subunits. Three heterotrimers associate to form the active enzyme.

It localises to the cytoplasm. The catalysed reaction is urea + 2 H2O + H(+) = hydrogencarbonate + 2 NH4(+). Its pathway is nitrogen metabolism; urea degradation; CO(2) and NH(3) from urea (urease route): step 1/1. This is Urease subunit beta from Saccharophagus degradans (strain 2-40 / ATCC 43961 / DSM 17024).